The following is a 102-amino-acid chain: Small ribosomal subunit protein eS24 (102 aa).

Belongs to the eukaryotic ribosomal protein eS24 family.

The polypeptide is Small ribosomal subunit protein eS24 (Methanococcus aeolicus (strain ATCC BAA-1280 / DSM 17508 / OCM 812 / Nankai-3)).